A 729-amino-acid chain; its full sequence is Glycerophosphodiester phosphodiesterase GDPDL5 (729 aa).

The signal sequence occupies residues Met1–Ser22. GP-PDE domains follow at residues Pro33–Ile320 and Ile337–Arg645. Asn88, Asn162, Asn218, Asn227, Asn285, Asn302, Asn390, Asn401, and Asn507 each carry an N-linked (GlcNAc...) asparagine glycan. A helical transmembrane segment spans residues Ala709–Val729.

Belongs to the glycerophosphoryl diester phosphodiesterase family. Expressed in stems, flowers and siliques.

Its subcellular location is the membrane. It carries out the reaction a sn-glycero-3-phosphodiester + H2O = an alcohol + sn-glycerol 3-phosphate + H(+). This chain is Glycerophosphodiester phosphodiesterase GDPDL5, found in Arabidopsis thaliana (Mouse-ear cress).